The chain runs to 240 residues: 1-(5-phosphoribosyl)-5-[(5-phosphoribosylamino)methylideneamino] imidazole-4-carboxamide isomerase (240 aa).

Aspartate 8 serves as the catalytic Proton acceptor. Aspartate 129 serves as the catalytic Proton donor.

This sequence belongs to the HisA/HisF family.

It localises to the cytoplasm. It carries out the reaction 1-(5-phospho-beta-D-ribosyl)-5-[(5-phospho-beta-D-ribosylamino)methylideneamino]imidazole-4-carboxamide = 5-[(5-phospho-1-deoxy-D-ribulos-1-ylimino)methylamino]-1-(5-phospho-beta-D-ribosyl)imidazole-4-carboxamide. It participates in amino-acid biosynthesis; L-histidine biosynthesis; L-histidine from 5-phospho-alpha-D-ribose 1-diphosphate: step 4/9. This chain is 1-(5-phosphoribosyl)-5-[(5-phosphoribosylamino)methylideneamino] imidazole-4-carboxamide isomerase, found in Caldanaerobacter subterraneus subsp. tengcongensis (strain DSM 15242 / JCM 11007 / NBRC 100824 / MB4) (Thermoanaerobacter tengcongensis).